Consider the following 176-residue polypeptide: Probable DNA-directed RNA polymerase subunit delta (176 aa).

The 68-residue stretch at cysteine 14 to tryptophan 81 folds into the HTH HARE-type domain. The disordered stretch occupies residues isoleucine 91–leucine 176. Acidic residues predominate over residues aspartate 106–leucine 176.

This sequence belongs to the RpoE family. RNAP is composed of a core of 2 alpha, a beta and a beta' subunits. The core is associated with a delta subunit and one of several sigma factors.

Its function is as follows. Participates in both the initiation and recycling phases of transcription. In the presence of the delta subunit, RNAP displays an increased specificity of transcription, a decreased affinity for nucleic acids, and an increased efficiency of RNA synthesis because of enhanced recycling. This chain is Probable DNA-directed RNA polymerase subunit delta, found in Bacillus thuringiensis (strain Al Hakam).